Reading from the N-terminus, the 272-residue chain is Centromere protein V-like protein 1 (272 aa).

The span at 1 to 17 shows a compositional bias: basic residues; that stretch reads MGRVRNRATAQRRRRKR. 2 disordered regions span residues 1-23 and 65-95; these read MGRVRNRATAQRRRRKRPGDPPA and RRVRKAGPRDLLPSAPTPDPPGPAPSPKDLD. A compositionally biased stretch (pro residues) spans 79–90; sequence APTPDPPGPAPS. Positions 133 to 246 constitute a CENP-V/GFA domain; the sequence is HTGGCHCGAV…EEVGGGDPGE (114 aa). Cys137, Cys139, Cys157, Cys159, Cys162, Cys201, and Cys204 together coordinate Zn(2+). The interval 240–272 is disordered; that stretch reads GGGDPGEEAAEEHKAIHKTSSQSAPACPREQEQ.

This sequence belongs to the Gfa family. The cofactor is Zn(2+).

This is Centromere protein V-like protein 1 from Homo sapiens (Human).